Here is a 250-residue protein sequence, read N- to C-terminus: Doublesex- and mab-3-related transcription factor dmd-3 (250 aa).

The segment at residues 19 to 68 (CQRCLNHGLREKRKNHKLSCTFRFCQCSNCIMVERRRQLNSRLMQIDGSR) is a DNA-binding region (DM 1). The span at 90–100 (CTSQSETTNES) shows a compositional bias: polar residues. A disordered region spans residues 90 to 115 (CTSQSETTNESSGEDKDDGKPKERRP). Positions 102 to 115 (GEDKDDGKPKERRP) are enriched in basic and acidic residues. A DNA-binding region (DM 2) is located at residues 117-164 (CQRCAQHSVVNRLKGHKRACPFRDCFCAKCQVVVERQKLMADQIKLRR). Positions 166 to 201 (QKREKNNLNSEREAPIAHSMTPSPIDTVTTTTTPTS) are disordered. The span at 169 to 180 (EKNNLNSEREAP) shows a compositional bias: basic and acidic residues. The segment covering 186–201 (TPSPIDTVTTTTTPTS) has biased composition (low complexity).

The protein belongs to the DMRT family. As to expression, in males, expressed in the tail tip. Specifically, expressed in 15 male-specific muscles of the tail tip called the diagonal muscles, and also in core body muscles of both males and hermaphrodites. In males, expressed in ray A-neurons. In males, expressed in PHC sensory neurons. In males, it is also expressed in the hindgut, B lineage and somatic gonad. In hermaphrodites, expressed in the anchor cell only.

It is found in the nucleus. It localises to the perikaryon. Transcriptional activator which promotes male-specific development. Acts partially redundantly with the transcription factor mab-3 to coordinate tail tip cell fusion and retraction and thereby regulate male tail tip morphogenesis. This is most likely through the regulation of downstream effectors such as eff-1. May also negatively regulate the expression of other proteins implicated in male tail morphogenesis including nhr-25, vav-1 and arl-1 in tail tip cells. In males, plays a role in the development of ray A-neurons by negatively regulating the activity of the transcription factor ast-1. Plays a role in the male-specific differentiation of PHC sensory neurons into densely connected hub sensory neurons. Plays a role in male mating behavior. The chain is Doublesex- and mab-3-related transcription factor dmd-3 from Caenorhabditis elegans.